Consider the following 71-residue polypeptide: Protein SlyX homolog (71 aa).

This sequence belongs to the SlyX family.

This chain is Protein SlyX homolog, found in Rhodospirillum rubrum (strain ATCC 11170 / ATH 1.1.1 / DSM 467 / LMG 4362 / NCIMB 8255 / S1).